A 408-amino-acid polypeptide reads, in one-letter code: Histone acetyltransferase type B subunit 2 (408 aa).

WD repeat units follow at residues 120-160 (KHEQ…KDHG), 167-207 (YHKE…NKSP), 213-253 (VHTD…AIQK), 255-295 (SVSS…KPLH), and 299-339 (GHED…AEQQ). An interaction with the histone H4 N-terminus region spans residues 341–345 (DDAYD). A WD 6 repeat occupies 356–396 (GHRSPVNEFSHNSNVPWLMCSVEEENVLQIWKPANKIVRPP).

The protein belongs to the WD repeat RBAP46/RBAP48/MSI1 family. In terms of assembly, component of the HAT-B complex composed of at least HAT1 and HAT2. The HAT-B complex binds to histone H4 tail.

It is found in the cytoplasm. The protein localises to the nucleus. In terms of biological role, regulatory subunit of the histone acetylase B (HAT-B) complex. The complex acetylates 'Lys-12' of histone H4 which is required for telomeric silencing. The protein is Histone acetyltransferase type B subunit 2 (HAT2) of Kluyveromyces lactis (strain ATCC 8585 / CBS 2359 / DSM 70799 / NBRC 1267 / NRRL Y-1140 / WM37) (Yeast).